The following is a 307-amino-acid chain: MKFALRLLSVITTFVMLIVLIGGALVTKTGSGLGCGRQWPLCHGRFFPEMNPASIIEWSHRMSTGVSTILVLALAVLCWKKISPVFRETKFLVIMSIIFLLLQALLGALAVVFGSNALVMALHFGISLISFASVLLLALLVFEATRSETKLVKPLHIGKKMQFHIYGLITYTYIVVYTGAYVRHTKSSLACSVFPFCSKDGALPAYFNQWVQMSHRAAALLLFVWIFVAMFHAMKHYKEQKQLYYGWIISAILITLQAISGVMSVYSQLALGYALAHSFFISCLFGVLCYFCLLIARFKYESKEPFK.

Over 1-6 (MKFALR) the chain is Cytoplasmic. Residues 7 to 27 (LLSVITTFVMLIVLIGGALVT) form a helical membrane-spanning segment. At 28–65 (KTGSGLGCGRQWPLCHGRFFPEMNPASIIEWSHRMSTG) the chain is on the extracellular side. The cysteines at positions 35 and 42 are disulfide-linked. The active site involves Glu-57. His-60 lines the heme o pocket. Residues 66–86 (VSTILVLALAVLCWKKISPVF) traverse the membrane as a helical segment. At 87 to 92 (RETKFL) the chain is on the cytoplasmic side. A helical membrane pass occupies residues 93-113 (VIMSIIFLLLQALLGALAVVF). The Extracellular portion of the chain corresponds to 114–121 (GSNALVMA). Residues 122–142 (LHFGISLISFASVLLLALLVF) form a helical membrane-spanning segment. Heme o is bound at residue His-123. Residues 143 to 161 (EATRSETKLVKPLHIGKKM) lie on the Cytoplasmic side of the membrane. The chain crosses the membrane as a helical span at residues 162 to 182 (QFHIYGLITYTYIVVYTGAYV). Residues 183-216 (RHTKSSLACSVFPFCSKDGALPAYFNQWVQMSHR) lie on the Extracellular side of the membrane. Cys-191 and Cys-197 form a disulfide bridge. A heme b-binding site is contributed by His-215. The chain crosses the membrane as a helical span at residues 217–237 (AAALLLFVWIFVAMFHAMKHY). The Cytoplasmic portion of the chain corresponds to 238–242 (KEQKQ). A helical membrane pass occupies residues 243–263 (LYYGWIISAILITLQAISGVM). Topologically, residues 264 to 274 (SVYSQLALGYA) are extracellular. The chain crosses the membrane as a helical span at residues 275–295 (LAHSFFISCLFGVLCYFCLLI). Heme b is bound at residue His-277. Topologically, residues 296–307 (ARFKYESKEPFK) are cytoplasmic.

This sequence belongs to the COX15/CtaA family. Type 1 subfamily. Interacts with CtaB. Heme b serves as cofactor.

It localises to the cell membrane. The catalysed reaction is Fe(II)-heme o + 2 A + H2O = Fe(II)-heme a + 2 AH2. It functions in the pathway porphyrin-containing compound metabolism; heme A biosynthesis; heme A from heme O: step 1/1. In terms of biological role, catalyzes the conversion of heme O to heme A by two successive hydroxylations of the methyl group at C8. The first hydroxylation forms heme I, the second hydroxylation results in an unstable dihydroxymethyl group, which spontaneously dehydrates, resulting in the formyl group of heme A. This Bacillus pumilus (strain SAFR-032) protein is Heme A synthase.